We begin with the raw amino-acid sequence, 229 residues long: Heptaprenylglyceryl phosphate synthase (229 aa).

Residue lysine 12 participates in sn-glycerol 1-phosphate binding. 2 residues coordinate Mg(2+): aspartate 14 and threonine 40. Sn-glycerol 1-phosphate is bound by residues 159-164 (YIEYSG), glycine 189, and 209-210 (GN).

The protein belongs to the GGGP/HepGP synthase family. Group I subfamily. As to quaternary structure, homodimer. Mg(2+) is required as a cofactor.

The catalysed reaction is sn-glycerol 1-phosphate + all-trans-heptaprenyl diphosphate = 3-heptaprenyl-sn-glycero-1-phosphate + diphosphate. The protein operates within membrane lipid metabolism; glycerophospholipid metabolism. Functionally, prenyltransferase that catalyzes in vivo the transfer of the heptaprenyl moiety of heptaprenyl pyrophosphate (HepPP; 35 carbon atoms) to the C3 hydroxyl of sn-glycerol-1-phosphate (G1P), producing heptaprenylglyceryl phosphate (HepGP). This reaction is an ether-bond-formation step in the biosynthesis of archaea-type G1P-based membrane lipids found in Bacillales. This is Heptaprenylglyceryl phosphate synthase from Oceanobacillus iheyensis (strain DSM 14371 / CIP 107618 / JCM 11309 / KCTC 3954 / HTE831).